The sequence spans 171 residues: Actin-related protein 2/3 complex subunit 4 (171 aa).

The protein belongs to the ARPC4 family. In terms of assembly, component of the Arp2/3 complex composed of ARP2, ARP3, ARC40/p41-ARC, ARC35/p34-ARC, ARC18/p21-ARC, ARC19/p20-ARC and ARC16/p16-ARC.

Its subcellular location is the cytoplasm. It localises to the cytoskeleton. It is found in the actin patch. Its function is as follows. Functions as actin-binding component of the Arp2/3 complex which is involved in regulation of actin polymerization and together with an activating nucleation-promoting factor (NPF) mediates the formation of branched actin networks. Seems to contact the mother actin filament. This Saccharomyces cerevisiae (strain ATCC 204508 / S288c) (Baker's yeast) protein is Actin-related protein 2/3 complex subunit 4 (ARC19).